Consider the following 684-residue polypeptide: Sec1 family domain-containing protein 2 (684 aa).

It belongs to the STXBP/unc-18/SEC1 family.

Its function is as follows. May be involved in protein transport. This Mus musculus (Mouse) protein is Sec1 family domain-containing protein 2 (Scfd2).